Consider the following 210-residue polypeptide: MSKFIVIEGLEGAGKSTAIKNVLATLAKHGITSPVTTREPGGTPLAEKMRELVKQGHPDEPLTDMAELLLLYAARAQLVGNVIKPALARGEWVVGDRHDLSSQAYQGGGRGFDRELMMTMRNTVLGDFKPDLTIYMDIDPKLGLQRASARGELDRIEQMKLDFFERSRERYLEFANSDESIITIDAGQDLETVTNSIITALEAWLVKNGN.

9-16 (GLEGAGKS) serves as a coordination point for ATP.

This sequence belongs to the thymidylate kinase family.

The enzyme catalyses dTMP + ATP = dTDP + ADP. Phosphorylation of dTMP to form dTDP in both de novo and salvage pathways of dTTP synthesis. The sequence is that of Thymidylate kinase from Aliivibrio fischeri (strain ATCC 700601 / ES114) (Vibrio fischeri).